We begin with the raw amino-acid sequence, 130 residues long: Sirohydrochlorin cobaltochelatase (130 aa).

Histidine 12 (proton acceptor) is an active-site residue. Co(2+) is bound at residue histidine 12. Residue histidine 12 participates in Ni(2+) binding. Substrate-binding positions include glutamate 48 and 73–78; that span reads LASGVH. Histidine 78 contacts Co(2+). Ni(2+) is bound at residue histidine 78.

This sequence belongs to the CbiX family. CbiXS subfamily. In terms of assembly, homotetramer; dimer of dimers.

The enzyme catalyses Co-sirohydrochlorin + 2 H(+) = sirohydrochlorin + Co(2+). The catalysed reaction is Ni-sirohydrochlorin + 2 H(+) = sirohydrochlorin + Ni(2+). Its pathway is cofactor biosynthesis; adenosylcobalamin biosynthesis; cob(II)yrinate a,c-diamide from sirohydrochlorin (anaerobic route): step 1/10. Catalyzes the insertion of Co(2+) into sirohydrochlorin as part of the anaerobic pathway to cobalamin biosynthesis (Potential). Involved in the biosynthesis of the unique nickel-containing tetrapyrrole coenzyme F430, the prosthetic group of methyl-coenzyme M reductase (MCR), which plays a key role in methanogenesis and anaerobic methane oxidation. Catalyzes the insertion of Ni(2+) into sirohydrochlorin to yield Ni-sirohydrochlorin. The polypeptide is Sirohydrochlorin cobaltochelatase (Methanosarcina acetivorans (strain ATCC 35395 / DSM 2834 / JCM 12185 / C2A)).